The following is a 306-amino-acid chain: 4-hydroxy-3-methylbut-2-enyl diphosphate reductase 1 (306 aa).

Cys-10 contacts [4Fe-4S] cluster. (2E)-4-hydroxy-3-methylbut-2-enyl diphosphate-binding residues include His-39 and His-72. The dimethylallyl diphosphate site is built by His-39 and His-72. 2 residues coordinate isopentenyl diphosphate: His-39 and His-72. Cys-94 is a binding site for [4Fe-4S] cluster. His-122 is a (2E)-4-hydroxy-3-methylbut-2-enyl diphosphate binding site. His-122 contacts dimethylallyl diphosphate. Residue His-122 coordinates isopentenyl diphosphate. Glu-124 serves as the catalytic Proton donor. Residue Thr-162 participates in (2E)-4-hydroxy-3-methylbut-2-enyl diphosphate binding. [4Fe-4S] cluster is bound at residue Cys-192. (2E)-4-hydroxy-3-methylbut-2-enyl diphosphate contacts are provided by Ser-220, Ser-221, Asn-222, and Ser-264. Positions 220, 221, 222, and 264 each coordinate dimethylallyl diphosphate. The isopentenyl diphosphate site is built by Ser-220, Ser-221, Asn-222, and Ser-264.

Belongs to the IspH family. Requires [4Fe-4S] cluster as cofactor.

It catalyses the reaction isopentenyl diphosphate + 2 oxidized [2Fe-2S]-[ferredoxin] + H2O = (2E)-4-hydroxy-3-methylbut-2-enyl diphosphate + 2 reduced [2Fe-2S]-[ferredoxin] + 2 H(+). The catalysed reaction is dimethylallyl diphosphate + 2 oxidized [2Fe-2S]-[ferredoxin] + H2O = (2E)-4-hydroxy-3-methylbut-2-enyl diphosphate + 2 reduced [2Fe-2S]-[ferredoxin] + 2 H(+). It participates in isoprenoid biosynthesis; dimethylallyl diphosphate biosynthesis; dimethylallyl diphosphate from (2E)-4-hydroxy-3-methylbutenyl diphosphate: step 1/1. The protein operates within isoprenoid biosynthesis; isopentenyl diphosphate biosynthesis via DXP pathway; isopentenyl diphosphate from 1-deoxy-D-xylulose 5-phosphate: step 6/6. Functionally, catalyzes the conversion of 1-hydroxy-2-methyl-2-(E)-butenyl 4-diphosphate (HMBPP) into a mixture of isopentenyl diphosphate (IPP) and dimethylallyl diphosphate (DMAPP). Acts in the terminal step of the DOXP/MEP pathway for isoprenoid precursor biosynthesis. This chain is 4-hydroxy-3-methylbut-2-enyl diphosphate reductase 1, found in Rhodopseudomonas palustris (strain ATCC BAA-98 / CGA009).